We begin with the raw amino-acid sequence, 130 residues long: Lipoprotein LpqS (130 aa).

Positions Met1 to Ala23 are cleaved as a signal peptide. Residue Cys24 is the site of N-palmitoyl cysteine attachment. Cys24 carries S-diacylglycerol cysteine lipidation.

The protein resides in the cell membrane. May play an essential role in M.tuberculosis replication and survival inside the host cell. The protein is Lipoprotein LpqS of Mycobacterium tuberculosis (strain ATCC 25618 / H37Rv).